The following is a 511-amino-acid chain: Probable cytosol aminopeptidase (511 aa).

Mn(2+)-binding residues include Lys-255 and Asp-260. Lys-267 is an active-site residue. Residues Asp-278, Asp-337, and Glu-339 each coordinate Mn(2+). Arg-341 is a catalytic residue. The disordered stretch occupies residues 485–511; it reads GAAQAVSPKKAARKEPGAAARKARSAQ.

The protein belongs to the peptidase M17 family. Mn(2+) serves as cofactor.

It is found in the cytoplasm. It catalyses the reaction Release of an N-terminal amino acid, Xaa-|-Yaa-, in which Xaa is preferably Leu, but may be other amino acids including Pro although not Arg or Lys, and Yaa may be Pro. Amino acid amides and methyl esters are also readily hydrolyzed, but rates on arylamides are exceedingly low.. The catalysed reaction is Release of an N-terminal amino acid, preferentially leucine, but not glutamic or aspartic acids.. In terms of biological role, presumably involved in the processing and regular turnover of intracellular proteins. Catalyzes the removal of unsubstituted N-terminal amino acids from various peptides. The chain is Probable cytosol aminopeptidase from Variovorax paradoxus (strain S110).